The chain runs to 350 residues: DNA polymerase IV (350 aa).

Residues 4 to 185 (IIHIDMDCFY…LPLGKLPGIG (182 aa)) enclose the UmuC domain. Mg(2+) contacts are provided by Asp8 and Asp103. Glu104 is a catalytic residue.

The protein belongs to the DNA polymerase type-Y family. In terms of assembly, monomer. It depends on Mg(2+) as a cofactor.

It localises to the cytoplasm. The enzyme catalyses DNA(n) + a 2'-deoxyribonucleoside 5'-triphosphate = DNA(n+1) + diphosphate. In terms of biological role, poorly processive, error-prone DNA polymerase involved in untargeted mutagenesis. Copies undamaged DNA at stalled replication forks, which arise in vivo from mismatched or misaligned primer ends. These misaligned primers can be extended by PolIV. Exhibits no 3'-5' exonuclease (proofreading) activity. May be involved in translesional synthesis, in conjunction with the beta clamp from PolIII. The chain is DNA polymerase IV from Aeromonas hydrophila subsp. hydrophila (strain ATCC 7966 / DSM 30187 / BCRC 13018 / CCUG 14551 / JCM 1027 / KCTC 2358 / NCIMB 9240 / NCTC 8049).